The following is a 485-amino-acid chain: Probable cobyric acid synthase (485 aa).

In terms of domain architecture, GATase cobBQ-type spans 250-435; the sequence is EVEIAVIRLP…LHGLFDNENI (186 aa). C328 acts as the Nucleophile in catalysis. Residue H427 is part of the active site.

The protein belongs to the CobB/CobQ family. CobQ subfamily.

Its pathway is cofactor biosynthesis; adenosylcobalamin biosynthesis. Functionally, catalyzes amidations at positions B, D, E, and G on adenosylcobyrinic A,C-diamide. NH(2) groups are provided by glutamine, and one molecule of ATP is hydrogenolyzed for each amidation. The protein is Probable cobyric acid synthase of Methanosarcina acetivorans (strain ATCC 35395 / DSM 2834 / JCM 12185 / C2A).